Reading from the N-terminus, the 475-residue chain is Cytosolic non-specific dipeptidase (475 aa).

An N-acetylalanine modification is found at Ala-2. Lys-9 bears the N6-acetyllysine mark. A Phosphoserine modification is found at Ser-58. His-99 lines the Mn(2+) pocket. Residue Asp-101 is part of the active site. Asp-132 is a Mn(2+) binding site. The Proton acceptor role is filled by Glu-166. Substrate-binding positions include 166–167 (EE), Asp-195, and His-228. Mn(2+) contacts are provided by Glu-167 and Asp-195. Phosphoserine is present on Ser-299. Substrate-binding residues include Thr-330, Arg-343, Ser-417, and His-445. His-445 serves as a coordination point for Mn(2+).

It belongs to the peptidase M20A family. Homodimer. The cofactor is Mn(2+). Ubiquitously expressed with higher levels in kidney and liver (at protein level). Expressed in peripheral blood leukocytes. Expressed in gastric mucosa and down-regulated in gastric cancer mucosal tissues (at protein level). As to expression, broadly expressed in fetal tissues. Expressed in adult liver and placenta.

It localises to the cytoplasm. The catalysed reaction is Hydrolysis of dipeptides, preferentially hydrophobic dipeptides including prolyl amino acids.. It carries out the reaction L-threonyl-L-threonine + H2O = 2 L-threonine. The enzyme catalyses L-threonyl-L-serine + H2O = L-threonine + L-serine. It catalyses the reaction L-seryl-L-threonine + H2O = L-threonine + L-serine. The catalysed reaction is L-cysteinylglycine + H2O = L-cysteine + glycine. It carries out the reaction L-alanyl-L-cysteine + H2O = L-cysteine + L-alanine. The enzyme catalyses (S)-lactate + L-phenylalanine = N-[(S)-lactoyl]-L-phenylalanine + H2O. Inhibited by p-hydroxymercurybenzoate. The inhibitory concentration 50% (IC(50)) is 13 uM. Inhibited by bestatin. The inhibitory concentration 50% (IC(50)) is 7 nM at pH 9.5. Functionally, catalyzes the peptide bond hydrolysis in dipeptides, displaying a non-redundant activity toward threonyl dipeptides. Mediates threonyl dipeptide catabolism in a tissue-specific way. Has high dipeptidase activity toward cysteinylglycine, an intermediate metabolite in glutathione metabolism. Metabolizes N-lactoyl-amino acids, both through hydrolysis to form lactic acid and amino acids, as well as through their formation by reverse proteolysis. Plays a role in the regulation of cell cycle arrest and apoptosis. This Homo sapiens (Human) protein is Cytosolic non-specific dipeptidase.